The primary structure comprises 3132 residues: Toxin CdiA (3132 aa).

Residues Met-1 to Ala-32 constitute a signal peptide (signal). Residues Pro-36–Thr-322 are two-partner system transport domain (TPS). An FHA-1 region spans residues Gly-351 to Asn-1378. The tract at residues Ser-1379–Ser-1635 is receptor-binding domain (RBD). Residues Tyr-1636–Asn-1820 form a YP domain region. The periplasmic FHA-1 repeat (pFR) stretch occupies residues Gly-1821–Asn-1859. The segment at Arg-1930 to Gln-2526 is FHA-2. Disordered regions lie at residues Thr-2195–Gly-2228 and Ala-2456–Gln-2497. Composition is skewed to polar residues over residues Gly-2217–Gly-2228 and Val-2483–Gln-2497. A pre-toxin (PT) domain region spans residues Asp-2862–Ser-2904. The short motif at Val-2905–Asn-2908 is the VENN CT cleavage motif element. Residues Ala-2909–Glu-3121 form a C-terminal effector domain (CT) region.

It in the N-terminal section; belongs to the CdiA toxin family. As to quaternary structure, probably interacts with cognate immunity protein CdiI. Post-translationally, expressed as 303 kDa protein which can be processed to 284 kDa and 195 kDa forms.

It is found in the secreted. Its subcellular location is the target cell. The protein localises to the target cell cytoplasm. In terms of biological role, toxic component of a toxin-immunity protein module, which functions as a cellular contact-dependent growth inhibition (CDI) system. CDI modules allow bacteria to communicate with and inhibit the growth of closely related neighboring bacteria (target cell counts decrease 1000- to 10(5)-fold) in a contact-dependent fashion. Inhibitory cells must be in logarithmic (not stationary) phase to inhibit growth of their targets, but protein synthesis is not necessary. The presence of P or S but not type 1 pili protects the target cells against growth inhibition for this CDI. BamA on the outer membrane of target cells acts as a receptor for CdiA, while target cell multidrug efflux pump AcrB facilitates its transport into the cytoplasm. Outer membrane receptor function is dependent on extracellular loops of BamA. Cells undergoing CDI show a 2- to 5-fold reversible decrease in aerobic respiration, proton motive force and steady-state ATP levels, suggesting this CT module is an ionophore that disrupts the target cell's inner cell membrane. Growth recovery requires an energy source. Cells expressing this protein in the absence of CdiI initially form filaments, some of which contain multiple nucleoids, while others are devoid of nucleoids. CDI cells induce the phage shock response, but pspA is not required for recovery from CDI. CDI is neutralized by its cognate immunity protein CdiI, but not by non-cognate CdiI from other bacteria with different CDI systems. Plays a role in biofilm formation, a region N-terminal to residue 644 is implicated in this receptor-independent cell adhesion. The CdiA protein is thought to be exported from the cell through the central lumen of CdiB, the other half of its two-partner system (TPS). The TPS domain probably remains associated with CdiB while the FHA-1 domain forms an extended filament (33 nm long) with the receptor-binding domain (RBD) at its extremity; in the secretion arrested state the C-terminus of the RBD and YP domains form a hairpin-like structure as the FHA-2, PT and CT domains are periplasmic. The YP domain is probably responsible for this arrest at the point where it re-enters the host cell periplasm. Upon binding to a target cell outer membrane receptor (BamA for this CDI) a signal is transmitted to activate secretion. The filament becomes about 5 nm longer, the rest of CdiA is secreted and the FHA-2 domain becomes stably associated with the target cell's outer membrane where it facilitates entry of the toxic CT domain into the target cell periplasm. From there the toxic CT domain is cleaved and gains access to the target cell cytoplasm via an inner membrane protein (multidrug efflux pump AcrB for this CDI). The protein is Toxin CdiA of Escherichia coli.